The sequence spans 95 residues: Aspartyl/glutamyl-tRNA(Asn/Gln) amidotransferase subunit C (95 aa).

The protein belongs to the GatC family. As to quaternary structure, heterotrimer of A, B and C subunits.

The catalysed reaction is L-glutamyl-tRNA(Gln) + L-glutamine + ATP + H2O = L-glutaminyl-tRNA(Gln) + L-glutamate + ADP + phosphate + H(+). It catalyses the reaction L-aspartyl-tRNA(Asn) + L-glutamine + ATP + H2O = L-asparaginyl-tRNA(Asn) + L-glutamate + ADP + phosphate + 2 H(+). Its function is as follows. Allows the formation of correctly charged Asn-tRNA(Asn) or Gln-tRNA(Gln) through the transamidation of misacylated Asp-tRNA(Asn) or Glu-tRNA(Gln) in organisms which lack either or both of asparaginyl-tRNA or glutaminyl-tRNA synthetases. The reaction takes place in the presence of glutamine and ATP through an activated phospho-Asp-tRNA(Asn) or phospho-Glu-tRNA(Gln). This is Aspartyl/glutamyl-tRNA(Asn/Gln) amidotransferase subunit C from Brucella abortus (strain S19).